A 428-amino-acid polypeptide reads, in one-letter code: E3 ubiquitin-protein ligase RNF128 (428 aa).

Residues 1 to 38 form the signal peptide; the sequence is MGPPLGAGVSCRGGCGSSRLLAWCFLLALSPQAPGSRG. Residues N48, N59, and N101 are each glycosylated (N-linked (GlcNAc...) asparagine). The region spanning 75–183 is the PA domain; it reads SPLEPVAGVL…LKGTKILQSI (109 aa). A helical transmembrane segment spans residues 208-228; that stretch reads IFFVSVSFFIITAATVGYFIF. An RING-type; atypical zinc finger spans residues 277-318; sequence CAVCIELYKPNDLVRILTCNHIFHKTCVDPWLLEHRTCPMCK. The tract at residues 346–428 is disordered; sequence ISNSASSHEE…QETAVREIKS (83 aa). The segment covering 416-428 has biased composition (basic and acidic residues); that stretch reads TPHQETAVREIKS.

In terms of processing, auto-ubiquitinated. Controls the development of T-cell clonal anergy by ubiquitination.

The protein localises to the cytoplasm. It is found in the endomembrane system. Its subcellular location is the cytoskeleton. It localises to the perinuclear region. It catalyses the reaction S-ubiquitinyl-[E2 ubiquitin-conjugating enzyme]-L-cysteine + [acceptor protein]-L-lysine = [E2 ubiquitin-conjugating enzyme]-L-cysteine + N(6)-ubiquitinyl-[acceptor protein]-L-lysine.. It functions in the pathway protein modification; protein ubiquitination. In terms of biological role, E3 ubiquitin-protein ligase that catalyzes 'Lys-27', 'Lys-48'- or 'Lys-63'-linked polyubiquitin chains formation and plays a role in different biological processes such as modulation of immune response, cytoskeletal dynamics or protein homeostasis. Inhibits IL2 and IL4 transcription, thereby playing an important role in the induction of the anergic phenotype, a long-term stable state of T-lymphocyte unresponsiveness to antigenic stimulation associated with the blockade of interleukin production. Ubiquitinates ARPC5 with 'Lys-48' linkages and COR1A with 'Lys-63' linkages leading to their degradation, down-regulation of these cytoskeletal components results in impaired lamellipodium formation and reduced accumulation of F-actin at the immunological synapse. Functions in the patterning of the dorsal ectoderm; sensitizes ectoderm to respond to neural-inducing signals. Plays a positive role in innate immune response by promoting 'Lys-63'-linked ubiquitination of TBK1 after RNA- or DNA-virus infection. Regulates alveolar macrophage activation and neutrophil infiltration by interacting with TLR4, targeting it for degradation, and inhibiting NF-kappa-B activation, hence decreasing pro-inflammatory cytokines. Negatively regulates the IL-3/STAT5 signaling pathway by facilitating 'Lys-27'-linked polyubiquitination of IL3RA leading to its degradation via lysosomal pathway. Directly regulates the N-glycosylation process in the endoplasmic reticulum by targeting the glycosyl-transferase RPN1 for ubiquitination and degradation. Other substrates targeted for degradation by RNF128 include transmembrane proteins CD40L, CD83 or the tetraspanin CD151. The chain is E3 ubiquitin-protein ligase RNF128 (RNF128) from Pongo abelii (Sumatran orangutan).